The following is a 345-amino-acid chain: Phosphoribosylformylglycinamidine cyclo-ligase (345 aa).

This sequence belongs to the AIR synthase family.

The protein localises to the cytoplasm. It catalyses the reaction 2-formamido-N(1)-(5-O-phospho-beta-D-ribosyl)acetamidine + ATP = 5-amino-1-(5-phospho-beta-D-ribosyl)imidazole + ADP + phosphate + H(+). It participates in purine metabolism; IMP biosynthesis via de novo pathway; 5-amino-1-(5-phospho-D-ribosyl)imidazole from N(2)-formyl-N(1)-(5-phospho-D-ribosyl)glycinamide: step 2/2. This Salmonella choleraesuis (strain SC-B67) protein is Phosphoribosylformylglycinamidine cyclo-ligase.